The primary structure comprises 232 residues: Large ribosomal subunit protein uL1 (232 aa).

This sequence belongs to the universal ribosomal protein uL1 family. As to quaternary structure, part of the 50S ribosomal subunit.

Its function is as follows. Binds directly to 23S rRNA. The L1 stalk is quite mobile in the ribosome, and is involved in E site tRNA release. Functionally, protein L1 is also a translational repressor protein, it controls the translation of the L11 operon by binding to its mRNA. This is Large ribosomal subunit protein uL1 from Syntrophus aciditrophicus (strain SB).